The chain runs to 768 residues: Cullin-3-B (768 aa).

The disordered stretch occupies residues 677-698 (VAAKQGESDPERKETRQKVDDD). The span at 682-698 (GESDPERKETRQKVDDD) shows a compositional bias: basic and acidic residues. Residues 698–760 (DRKHEIEAAI…REYLARTPED (63 aa)) form the Cullin neddylation domain. Lysine 712 is covalently cross-linked (Glycyl lysine isopeptide (Lys-Gly) (interchain with G-Cter in NEDD8)).

The protein belongs to the cullin family. Component of multiple BCR (BTB-CUL3-RBX1) E3 ubiquitin-protein ligase complexes formed of cul3, rbx1 and a variable BTB domain-containing protein acting as both, adapter to cullin and substrate recognition subunit. Interacts with btbd6. In terms of processing, neddylated. Attachment of NEDD8 is required for the E3 ubiquitin-protein ligase activity of the SCF-like complex.

The protein resides in the nucleus. It functions in the pathway protein modification; protein ubiquitination. In terms of biological role, probable core component of cullin-based SCF-like E3 ubiquitin-protein ligase complexes which mediate the ubiquitination and subsequent proteasomal degradation of target proteins. The E3 ubiquitin-protein ligase activity of the complex is dependent on the neddylation of the cullin subunit. Involved in ER-Golgi transport by regulating the size of COPII coats, thereby playing a key role in collagen export, which is required for embryonic stem (ES) cells division. May play a role in the regulation of mittotic entry via ubiquitination of aurka. This is Cullin-3-B (cul3b) from Xenopus laevis (African clawed frog).